Here is a 614-residue protein sequence, read N- to C-terminus: Putative ankyrin repeat protein RBE_0997 (614 aa).

ANK repeat units follow at residues 3-32, 36-65, 69-98, 102-131, 135-164, 168-197, 201-231, 239-268, and 272-301; these read KDEELLIEAIENDDLKEVQKLLQEGVDPNI, DDKPCILSAIRNKNLDIVSVLLENGANPNA, DGEPIISAAIRTKRLDIINILLENRADPNL, RKNTILLKAIQSNNLDIVNAFLNKGANLNA, SGYPIFLKAIKSENLEIINALLEKGANPNL, DGSPLLFTAINTKNLDIIDALIKMGANVEA, DGNTVLNVLLERRGNVNIISLLIENSQDKEK, NGETFLHLAAQQGNSKIFDKYLDYYPTVNI, and AGYTPLYWSKLLGHTEISNKLIERAEELKE. Residues 348-580 form the Glutamine amidotransferase type-1 domain; sequence NVEDIDYRKI…VQSAETFMNK (233 aa). Cysteine 444 serves as the catalytic Nucleophile. Catalysis depends on residues histidine 547 and glutamate 549.

The polypeptide is Putative ankyrin repeat protein RBE_0997 (Rickettsia bellii (strain RML369-C)).